Here is a 156-residue protein sequence, read N- to C-terminus: Transcription antitermination protein NusB (156 aa).

It belongs to the NusB family.

Functionally, involved in transcription antitermination. Required for transcription of ribosomal RNA (rRNA) genes. Binds specifically to the boxA antiterminator sequence of the ribosomal RNA (rrn) operons. The protein is Transcription antitermination protein NusB of Mycolicibacterium paratuberculosis (strain ATCC BAA-968 / K-10) (Mycobacterium paratuberculosis).